Reading from the N-terminus, the 184-residue chain is Endoribonuclease YbeY (184 aa).

2 stretches are compositionally biased toward acidic residues: residues 1 to 11 (MTVEVGADENP) and 19 to 29 (DGAGDESDDED). The tract at residues 1 to 37 (MTVEVGADENPDFAHDETDGAGDESDDEDAQGRDPEL) is disordered. Positions 146, 150, and 156 each coordinate Zn(2+).

This sequence belongs to the endoribonuclease YbeY family. Zn(2+) serves as cofactor.

The protein localises to the cytoplasm. In terms of biological role, single strand-specific metallo-endoribonuclease involved in late-stage 70S ribosome quality control and in maturation of the 3' terminus of the 16S rRNA. The chain is Endoribonuclease YbeY from Burkholderia mallei (strain ATCC 23344).